Reading from the N-terminus, the 328-residue chain is Carbonic anhydrase, chloroplastic (328 aa).

A compositionally biased stretch (low complexity) spans 1 to 15 (MSTSSINGFSLSSLS). The tract at residues 1–26 (MSTSSINGFSLSSLSPAKTSTKRTTL) is disordered. Residues 1 to 70 (MSTSSINGFS…IITPVLREEM (70 aa)) constitute a chloroplast transit peptide.

It belongs to the beta-class carbonic anhydrase family. As to quaternary structure, homohexamer.

Its subcellular location is the plastid. It is found in the chloroplast stroma. It catalyses the reaction hydrogencarbonate + H(+) = CO2 + H2O. Reversible hydration of carbon dioxide. In Pisum sativum (Garden pea), this protein is Carbonic anhydrase, chloroplastic.